A 503-amino-acid polypeptide reads, in one-letter code: Cytochrome P450 3A8 (503 aa).

C442 contacts heme.

Belongs to the cytochrome P450 family. Heme serves as cofactor.

It localises to the endoplasmic reticulum membrane. The protein resides in the microsome membrane. The enzyme catalyses an organic molecule + reduced [NADPH--hemoprotein reductase] + O2 = an alcohol + oxidized [NADPH--hemoprotein reductase] + H2O + H(+). In terms of biological role, catalyzes nifedipine and nilvadipine oxidations. The chain is Cytochrome P450 3A8 (CYP3A8) from Macaca fascicularis (Crab-eating macaque).